A 120-amino-acid polypeptide reads, in one-letter code: Ribosome-binding factor A (120 aa).

This sequence belongs to the RbfA family. As to quaternary structure, monomer. Binds 30S ribosomal subunits, but not 50S ribosomal subunits or 70S ribosomes.

It localises to the cytoplasm. Functionally, one of several proteins that assist in the late maturation steps of the functional core of the 30S ribosomal subunit. Associates with free 30S ribosomal subunits (but not with 30S subunits that are part of 70S ribosomes or polysomes). Required for efficient processing of 16S rRNA. May interact with the 5'-terminal helix region of 16S rRNA. This Clostridium botulinum (strain Loch Maree / Type A3) protein is Ribosome-binding factor A.